A 54-amino-acid polypeptide reads, in one-letter code: DCSQDCAACSILARPAELNTETCILECEGKLSSNDTEGGLCKEFLHPSKVDLPR.

Cystine bridges form between C2-C23, C6-C27, and C9-C41.

Belongs to the opioid neuropeptide precursor family. As to quaternary structure, member of a multiprotein complex. As to expression, salivary gland.

Its subcellular location is the secreted. Its function is as follows. Paralytic toxin that immobilizes a mealworm for 7 days. Inhibits the transient receptor potential cation channel subfamily V member 6 (TRPV6). In Blarina brevicauda (Northern short-tailed shrew), this protein is Soricidin.